A 359-amino-acid chain; its full sequence is Glycerol-1-phosphate dehydrogenase [NAD(P)+] (359 aa).

Residues 107–111 and 129–132 each bind NAD(+); these read GRVID and TAAS. A substrate-binding site is contributed by aspartate 134. Residue serine 138 coordinates NAD(+). Aspartate 181 contributes to the substrate binding site. Zn(2+) is bound by residues aspartate 181 and histidine 261. Histidine 265 is a binding site for substrate. Zn(2+) is bound at residue histidine 277.

Belongs to the glycerol-1-phosphate dehydrogenase family. Requires Zn(2+) as cofactor.

The protein localises to the cytoplasm. The enzyme catalyses sn-glycerol 1-phosphate + NAD(+) = dihydroxyacetone phosphate + NADH + H(+). The catalysed reaction is sn-glycerol 1-phosphate + NADP(+) = dihydroxyacetone phosphate + NADPH + H(+). Its pathway is membrane lipid metabolism; glycerophospholipid metabolism. Its function is as follows. Catalyzes the NAD(P)H-dependent reduction of dihydroxyacetonephosphate (DHAP or glycerone phosphate) to glycerol 1-phosphate (G1P). The G1P thus generated is used as the glycerophosphate backbone of phospholipids in the cellular membranes of Archaea. This Methanosphaerula palustris (strain ATCC BAA-1556 / DSM 19958 / E1-9c) protein is Glycerol-1-phosphate dehydrogenase [NAD(P)+].